The following is a 107-amino-acid chain: U1-lycotoxin-Ls1n (107 aa).

Positions 1-20 (MMKVLVVVALLVTLISYSSS) are cleaved as a signal peptide. Residues 21–41 (EGIDDLEADELLSLMANEQTR) constitute a propeptide that is removed on maturation. Intrachain disulfides connect Cys-44-Cys-59, Cys-51-Cys-68, Cys-58-Cys-86, and Cys-70-Cys-84.

This sequence belongs to the neurotoxin 19 (CSTX) family. 04 (U1-Lctx) subfamily. Expressed by the venom gland.

The protein localises to the secreted. This is U1-lycotoxin-Ls1n from Lycosa singoriensis (Wolf spider).